Consider the following 300-residue polypeptide: E3 ubiquitin-protein ligase RNF212B (300 aa).

Residues 6–40 (CNQCFRKDGAHFFVTSCGHIFCKKCVTLEKCAVCG) form an RING-type zinc finger. A coiled-coil region spans residues 88-124 (LIAFYKHRITKLETAMQETQQALVSQDKELSVLRKEN). Disordered stretches follow at residues 141 to 251 (YQGS…HTRV) and 280 to 300 (PYQQ…TTSR). A compositionally biased stretch (polar residues) spans 155–169 (TSPSQSVTPRPSFQH). Residues 170–183 (SSQVVSRSSSVESV) are compositionally biased toward low complexity. Gly residues predominate over residues 191–200 (GSLGQGGRGL). Residues 211-234 (NETPSPASTHSLSYRPSSASSGQG) show a composition bias toward polar residues.

In terms of assembly, homodimer. In terms of processing, autoubiquitinated.

The protein resides in the chromosome. The enzyme catalyses S-ubiquitinyl-[E2 ubiquitin-conjugating enzyme]-L-cysteine + [acceptor protein]-L-lysine = [E2 ubiquitin-conjugating enzyme]-L-cysteine + N(6)-ubiquitinyl-[acceptor protein]-L-lysine.. It participates in protein modification; protein ubiquitination. Functionally, ubiquitin E3 ligase that acts as a crucial factor for crossing-over (CO) formation during meiosis. Essential for normal prophase I progression and for ensuring appropriate CO designation in meiosis. Recruits key components of the cross-over machinery either directly ou indirectly, leading to the activation of the MutL-gamma complex. The function of RNF212B in CO designation is dependent on its catalytic activity. This Pongo abelii (Sumatran orangutan) protein is E3 ubiquitin-protein ligase RNF212B (RNF212B).